Consider the following 380-residue polypeptide: Glucose-1-phosphate adenylyltransferase (380 aa).

Alpha-D-glucose 1-phosphate contacts are provided by residues Gly-164, 179-180 (EK), and Ser-190.

Belongs to the bacterial/plant glucose-1-phosphate adenylyltransferase family. Homotetramer.

The catalysed reaction is alpha-D-glucose 1-phosphate + ATP + H(+) = ADP-alpha-D-glucose + diphosphate. Its pathway is glycan biosynthesis; glycogen biosynthesis. Its function is as follows. Involved in the biosynthesis of ADP-glucose, a building block required for the elongation reactions to produce glycogen. Catalyzes the reaction between ATP and alpha-D-glucose 1-phosphate (G1P) to produce pyrophosphate and ADP-Glc. This is Glucose-1-phosphate adenylyltransferase from Streptococcus pneumoniae (strain CGSP14).